The following is a 37-amino-acid chain: Kappa-actitoxin-Bcs3b (37 aa).

In terms of domain architecture, ShKT spans 2–37; the sequence is CKDGFPTATCQHAKLVGNCKNSQKYRANCAKTCGPC. 3 disulfide bridges follow: Cys2-Cys37, Cys11-Cys30, and Cys20-Cys34. The crucial for binding to potassium channels stretch occupies residues 25–26; the sequence is KY.

It belongs to the sea anemone type 1 potassium channel toxin family. Type 1b subfamily.

The protein localises to the secreted. Its subcellular location is the nematocyst. Functionally, inhibits voltage-gated potassium channels (IC(50)=14.42 nM for rKCNA1/Kv1.1, IC(50)=80.4 nM for rKCNA2/Kv1.2, IC(50)=7.76 nM for rKCNA6/Kv1.6, IC(50)=13.12 nM for hKCNA3/Kv1.3, and IC(50)=49.14 nM for insect Shaker IR). Binds the Shaker IR channels in a voltage-independent manner. The polypeptide is Kappa-actitoxin-Bcs3b (Bunodosoma caissarum (Sea anemone)).